A 268-amino-acid polypeptide reads, in one-letter code: Hydroxyethylthiazole kinase (268 aa).

Residue methionine 45 coordinates substrate. Positions 121 and 167 each coordinate ATP. Substrate is bound at residue glycine 194.

Belongs to the Thz kinase family. It depends on Mg(2+) as a cofactor.

The enzyme catalyses 5-(2-hydroxyethyl)-4-methylthiazole + ATP = 4-methyl-5-(2-phosphooxyethyl)-thiazole + ADP + H(+). The protein operates within cofactor biosynthesis; thiamine diphosphate biosynthesis; 4-methyl-5-(2-phosphoethyl)-thiazole from 5-(2-hydroxyethyl)-4-methylthiazole: step 1/1. Its function is as follows. Catalyzes the phosphorylation of the hydroxyl group of 4-methyl-5-beta-hydroxyethylthiazole (THZ). This Bacillus anthracis (strain A0248) protein is Hydroxyethylthiazole kinase.